A 101-amino-acid chain; its full sequence is Protamine-3 (101 aa).

Residues 1–101 (MGSRCAKLST…PSPEPKQTHS (101 aa)) are disordered. A compositionally biased stretch (acidic residues) spans 45–67 (EGEEEEEDEEEEEEEEEEEEEEQ). Serine 93 carries the post-translational modification Phosphoserine.

It belongs to the protamine P3 family. As to expression, testis.

The protein localises to the nucleus. It is found in the chromosome. Its function is as follows. Protamines substitute for histones in the chromatin of sperm during the haploid phase of spermatogenesis. They compact sperm DNA into a highly condensed, stable and inactive complex. This Mus musculus (Mouse) protein is Protamine-3 (Prm3).